The sequence spans 300 residues: NAD kinase (300 aa).

Asp75 acts as the Proton acceptor in catalysis. Residues 75-76 (DG), 149-150 (ND), Arg177, Asp179, 190-195 (TAYALS), Ala214, and Gln248 contribute to the NAD(+) site.

Belongs to the NAD kinase family. It depends on a divalent metal cation as a cofactor.

It localises to the cytoplasm. The enzyme catalyses NAD(+) + ATP = ADP + NADP(+) + H(+). Functionally, involved in the regulation of the intracellular balance of NAD and NADP, and is a key enzyme in the biosynthesis of NADP. Catalyzes specifically the phosphorylation on 2'-hydroxyl of the adenosine moiety of NAD to yield NADP. This is NAD kinase from Burkholderia lata (strain ATCC 17760 / DSM 23089 / LMG 22485 / NCIMB 9086 / R18194 / 383).